A 213-amino-acid chain; its full sequence is Penicillin-binding protein activator LpoB (213 aa).

The first 19 residues, 1 to 19 (MTKMSRYALITALAMFLAG), serve as a signal peptide directing secretion. A lipid anchor (N-palmitoyl cysteine) is attached at cysteine 20. Cysteine 20 carries the S-diacylglycerol cysteine lipid modification. Positions 28–74 (PVEEVKPAPEQPAEPQQPVPTVPSVPTIPQQPGPIEHEDQTAPPAPH) are disordered. Pro residues predominate over residues 36 to 50 (PEQPAEPQQPVPTVP).

It belongs to the LpoB family. Interacts with PBP1b.

It is found in the cell outer membrane. Its function is as follows. Regulator of peptidoglycan synthesis that is essential for the function of penicillin-binding protein 1B (PBP1b). In Escherichia coli O157:H7, this protein is Penicillin-binding protein activator LpoB.